A 406-amino-acid chain; its full sequence is Collagen and calcium-binding EGF domain-containing protein 1 (406 aa).

A signal peptide spans 1-34 (MVPPPPSRGGAARGQLGRSLGPLLLLLALGHTWT). The EGF-like; calcium-binding domain maps to 134-175 (DIDECASSNGTLCAHICINTLGSYRCECREGYIREDDGKTCT). Disulfide bonds link cysteine 138-cysteine 150, cysteine 146-cysteine 159, and cysteine 161-cysteine 174. The N-linked (GlcNAc...) asparagine glycan is linked to asparagine 142. An N-linked (GlcNAc...) asparagine glycan is attached at asparagine 182. Disordered stretches follow at residues 244-335 (YLPG…PGSF) and 360-406 (RTHS…DFYP). 2 consecutive Collagen-like domains span residues 245–290 (LPGP…PMGP) and 300–333 (GRRGPVGPPGAPGRDGSKGERGAPGPRGSPGPPG). Over residues 270–279 (PGMPGPPGQP) the composition is skewed to pro residues. A compositionally biased stretch (low complexity) spans 281-292 (PRGSMGPMGPSP). Serine 385 carries O-linked (Xyl...) (chondroitin sulfate) serine glycosylation. Positions 386-406 (GDDHPRRTETRDLRAPRDFYP) are enriched in basic and acidic residues.

This sequence belongs to the CCBE1 family. As to expression, detected in fibroblasts and urine (at protein level). Not expressed in blood or lymphatic endothelial cells.

The protein localises to the secreted. Functionally, required for lymphangioblast budding and angiogenic sprouting from venous endothelium during embryogenesis. The chain is Collagen and calcium-binding EGF domain-containing protein 1 (CCBE1) from Homo sapiens (Human).